The chain runs to 388 residues: Xylose isomerase (388 aa).

Residues His-54 and Asp-57 contribute to the active site. Mg(2+)-binding residues include Glu-181, Glu-217, His-220, Asp-245, Asp-255, Asp-257, and Asp-287.

The protein belongs to the xylose isomerase family. Homotetramer. Requires Mg(2+) as cofactor.

The protein resides in the cytoplasm. It catalyses the reaction alpha-D-xylose = alpha-D-xylulofuranose. This Streptomyces olivaceoviridis (Streptomyces corchorusii) protein is Xylose isomerase.